A 179-amino-acid chain; its full sequence is MASSATMLSSVATAACAAPAQASMVAPFVGLKSASAFPVTQKTATGLSTLPSNGGRVQCMKVWPIVGLKKFETLSYLPTLSVESLLKQIEYLIRNGWVPCLEFSLEGFVSRDNNKSPGYYDGRYWTMWKLPMFGCTGAAQVVKEAAECKKEYPAAFIRVIGFDNVRQVQCVSFIVEKPE.

The N-terminal 58 residues, 1–58, are a transit peptide targeting the chloroplast; sequence MASSATMLSSVATAACAAPAQASMVAPFVGLKSASAFPVTQKTATGLSTLPSNGGRVQ.

This sequence belongs to the RuBisCO small chain family. In terms of assembly, heterohexadecamer of 8 large and 8 small subunits.

The protein resides in the plastid. It localises to the chloroplast. Its function is as follows. RuBisCO catalyzes two reactions: the carboxylation of D-ribulose 1,5-bisphosphate, the primary event in carbon dioxide fixation, as well as the oxidative fragmentation of the pentose substrate. Both reactions occur simultaneously and in competition at the same active site. Although the small subunit is not catalytic it is essential for maximal activity. This chain is Ribulose bisphosphate carboxylase small subunit, chloroplastic 5, found in Fritillaria agrestis (Stinkbells).